The primary structure comprises 254 residues: 4-hydroxy-tetrahydrodipicolinate reductase (254 aa).

Residue 7–12 (GASGRI) participates in NAD(+) binding. An NADP(+)-binding site is contributed by Arg35. Residues 91–93 (GTT) and 115–118 (AHNM) each bind NAD(+). Residue His147 is the Proton donor/acceptor of the active site. His148 provides a ligand contact to (S)-2,3,4,5-tetrahydrodipicolinate. Lys151 functions as the Proton donor in the catalytic mechanism. A (S)-2,3,4,5-tetrahydrodipicolinate-binding site is contributed by 157 to 158 (GT).

Belongs to the DapB family.

Its subcellular location is the cytoplasm. It carries out the reaction (S)-2,3,4,5-tetrahydrodipicolinate + NAD(+) + H2O = (2S,4S)-4-hydroxy-2,3,4,5-tetrahydrodipicolinate + NADH + H(+). It catalyses the reaction (S)-2,3,4,5-tetrahydrodipicolinate + NADP(+) + H2O = (2S,4S)-4-hydroxy-2,3,4,5-tetrahydrodipicolinate + NADPH + H(+). It functions in the pathway amino-acid biosynthesis; L-lysine biosynthesis via DAP pathway; (S)-tetrahydrodipicolinate from L-aspartate: step 4/4. Functionally, catalyzes the conversion of 4-hydroxy-tetrahydrodipicolinate (HTPA) to tetrahydrodipicolinate. This is 4-hydroxy-tetrahydrodipicolinate reductase from Helicobacter pylori (strain ATCC 700392 / 26695) (Campylobacter pylori).